Here is a 400-residue protein sequence, read N- to C-terminus: Peptidase M20 domain-containing protein C757.05c (400 aa).

Positions Met-1–Ala-25 are cleaved as a signal peptide. An N-linked (GlcNAc...) asparagine glycan is attached at Asn-80. Asp-152 serves as a coordination point for Zn(2+). The active-site Proton acceptor is the Glu-186. Residue Glu-187 coordinates Zn(2+).

The protein belongs to the peptidase M20A family. Requires Zn(2+) as cofactor.

It localises to the secreted. This is Peptidase M20 domain-containing protein C757.05c from Schizosaccharomyces pombe (strain 972 / ATCC 24843) (Fission yeast).